A 243-amino-acid chain; its full sequence is Histone H2B.2 (243 aa).

Residue Ala2 is modified to N,N,N-trimethylalanine; alternate. Ala2 carries the n,N-dimethylalanine; alternate modification. Ala2 carries the N-methylalanine; alternate modification. Residues 67–145 are disordered; it reads PDERSLPVGE…KKKKKKKRDD (79 aa). The span at 120–132 shows a compositional bias: basic and acidic residues; that stretch reads GTLKKTDKVEKKQ. The segment covering 133 to 142 has biased composition (basic residues); that stretch reads ENKKKKKKKK.

This sequence belongs to the histone H2B family. As to quaternary structure, the nucleosome is a histone octamer containing two molecules each of H2A, H2B, H3 and H4 assembled in one H3-H4 heterotetramer and two H2A-H2B heterodimers. The octamer wraps approximately 147 bp of DNA. In terms of processing, can be acetylated to form H2BK6ac.

The protein resides in the nucleus. It localises to the chromosome. Its function is as follows. Core component of nucleosome. Nucleosomes wrap and compact DNA into chromatin, limiting DNA accessibility to the cellular machineries which require DNA as a template. Histones thereby play a central role in transcription regulation, DNA repair, DNA replication and chromosomal stability. DNA accessibility is regulated via a complex set of post-translational modifications of histones, also called histone code, and nucleosome remodeling. The sequence is that of Histone H2B.2 from Arabidopsis thaliana (Mouse-ear cress).